Reading from the N-terminus, the 109-residue chain is Nucleoid-associated protein Caul_4574 (109 aa).

This sequence belongs to the YbaB/EbfC family. In terms of assembly, homodimer.

Its subcellular location is the cytoplasm. It is found in the nucleoid. Functionally, binds to DNA and alters its conformation. May be involved in regulation of gene expression, nucleoid organization and DNA protection. The sequence is that of Nucleoid-associated protein Caul_4574 from Caulobacter sp. (strain K31).